The chain runs to 118 residues: UPF0342 protein BCG9842_B4422 (118 aa).

It belongs to the UPF0342 family.

This is UPF0342 protein BCG9842_B4422 from Bacillus cereus (strain G9842).